Here is an 808-residue protein sequence, read N- to C-terminus: Probable phosphoketolase 1 (808 aa).

It belongs to the XFP family. Thiamine diphosphate serves as cofactor.

In Nostoc sp. (strain PCC 7120 / SAG 25.82 / UTEX 2576), this protein is Probable phosphoketolase 1.